The sequence spans 143 residues: Peptide methionine sulfoxide reductase MsrB (143 aa).

One can recognise a MsrB domain in the interval 16–139 (DAELRRRLTP…NSAALNFESR (124 aa)). Cysteine 55, cysteine 58, cysteine 104, and cysteine 107 together coordinate Zn(2+). The active-site Nucleophile is the cysteine 128.

This sequence belongs to the MsrB Met sulfoxide reductase family. It depends on Zn(2+) as a cofactor.

It carries out the reaction L-methionyl-[protein] + [thioredoxin]-disulfide + H2O = L-methionyl-(R)-S-oxide-[protein] + [thioredoxin]-dithiol. In Burkholderia vietnamiensis (strain G4 / LMG 22486) (Burkholderia cepacia (strain R1808)), this protein is Peptide methionine sulfoxide reductase MsrB.